The chain runs to 327 residues: MAAPRSCVLWSYCGHGWSRLAGDCRLPGFRRSWLGATLSARSLSQEKRAAETHFGFETVSEKEKGGKVYQVFQSVARKYDLMNDMMSLGIHRAWKDLLIRKMHPLPGTQLLDVAGGTGDIAFRFLSYVQTQHERKQRRQLRTRQNLSWEEIARKYQSKEDPLGGSLVMVCDINREMLKVGKQKALARGHTAGLAWVLGDAEELPFDDDRFDVYTIAFGIRNVTHIDRALQEAHRVLKPGGRFLCLEFSQVNDPLISRLYDLYSFQVIPVIGEVIAGDWKSYQYLVESIRKFPNQEEFKDMIEDAGFQKVTYESLTSGIVAIHSGFKL.

A mitochondrion-targeting transit peptide spans 1-49; sequence MAAPRSCVLWSYCGHGWSRLAGDCRLPGFRRSWLGATLSARSLSQEKRA. Residues threonine 117, aspartate 171, and 199 to 200 contribute to the S-adenosyl-L-methionine site; that span reads DA.

This sequence belongs to the class I-like SAM-binding methyltransferase superfamily. MenG/UbiE family. Component of a multi-subunit COQ enzyme complex, composed of at least COQ3, COQ4, COQ5, COQ6, COQ7 and COQ9. Interacts with PYURF; the interaction is direct, stabilizes COQ5 protein and associates PYURF with COQ enzyme complex.

Its subcellular location is the mitochondrion inner membrane. It catalyses the reaction 2-methoxy-6-(all-trans-decaprenyl)benzene-1,4-diol + S-adenosyl-L-methionine = 5-methoxy-2-methyl-3-(all-trans-decaprenyl)benzene-1,4-diol + S-adenosyl-L-homocysteine + H(+). It functions in the pathway cofactor biosynthesis; ubiquinone biosynthesis. In terms of biological role, methyltransferase required for the conversion of 2-decaprenyl-6-methoxy-1,4-benzoquinol (DDMQH2) to 2-decaprenyl-3-methyl-6-methoxy-1,4-benzoquinol (DMQH2). This chain is 2-methoxy-6-polyprenyl-1,4-benzoquinol methylase, mitochondrial, found in Rattus norvegicus (Rat).